Consider the following 143-residue polypeptide: Small ribosomal subunit protein uS12 (143 aa).

Residues 1 to 20 (MGKPRGLRTARKHRSHRRDQ) are compositionally biased toward basic residues. Residues 1–26 (MGKPRGLRTARKHRSHRRDQRWHDKD) form a disordered region. P62 carries the post-translational modification Hydroxyproline.

This sequence belongs to the universal ribosomal protein uS12 family. As to quaternary structure, component of the 40S small ribosomal subunit.

Its subcellular location is the cytoplasm. It localises to the cytosol. The protein localises to the rough endoplasmic reticulum. The chain is Small ribosomal subunit protein uS12 (RpS23) from Dermacentor variabilis (American dog tick).